Here is a 544-residue protein sequence, read N- to C-terminus: Homeobox protein B-H1 (544 aa).

The segment covering 53 to 70 (STTTMSSGGSTTTASGIG) has biased composition (low complexity). Disordered regions lie at residues 53 to 73 (STTTMSSGGSTTTASGIGKPN), 92 to 179 (YKQQ…PPTA), 236 to 308 (GGVG…AFTD), and 471 to 544 (AANP…QIQV). A compositionally biased stretch (basic residues) spans 95–105 (QQHHQQLHHHN). The segment covering 106–131 (NNNNSGSSGGSSPAHSNNNNNINGDN) has biased composition (low complexity). Over residues 156–172 (THPHTHPHALMHPHGKL) the composition is skewed to basic residues. Over residues 247–262 (DLDDSSDYHEENEDCD) the composition is skewed to acidic residues. The span at 266 to 282 (MDDHSVCSNGGKDDDGN) shows a compositional bias: basic and acidic residues. Positions 283–293 (SVKSGSTSDMS) are enriched in polar residues. Positions 299 to 358 (QRKARTAFTDHQLQTLEKSFERQKYLSVQERQELAHKLDLSDCQVKTWYQNRRTKWKRQT) form a DNA-binding region, homeobox. Over residues 476-485 (GPHPVAPPPS) the composition is skewed to pro residues. Positions 492-506 (PSGLVKPIPAHSASA) are enriched in low complexity. Over residues 507–516 (SPPPRPPSTP) the composition is skewed to pro residues.

It belongs to the Antp homeobox family. As to expression, B-H1 and B-H2 are abundant in the eye-antenna imaginal disk. Expressed in R1 and R6 cells throughout larval stage until 30 hours after puparium formation, at which time expression is seen in the anterior and posterior primary pigment cells. Coexpressed in embryonic glial cells, neurons of the CNS and PNS, most latitudinal anterior cells of the developing notum and the central circular region of the leg and antennal imaginal disk throughout larval development.

It localises to the nucleus. B-H1 and B-H2 are regulated by members of the wg signaling pathway; wg and dpp. B-H1 and B-H2 are coexpressed and functionally required in R1 and R6 receptor cells and primary pigment cells for normal eye development. Coexpression is also required for the fate determination of external sensory organs, formation of notal microchaetae, formation of presutural macrochaetae, antennal development and for distal leg morphogenesis; segmentation and specification of tarsal segments 3-5. The chain is Homeobox protein B-H1 (B-H1) from Drosophila melanogaster (Fruit fly).